A 299-amino-acid polypeptide reads, in one-letter code: Tyrosine recombinase XerC (299 aa).

In terms of domain architecture, Core-binding (CB) spans 1–81; sequence MDEAIRRFIE…SWRQFYHWLQ (81 aa). A Tyr recombinase domain is found at 102–281; that stretch reads LLPKALPVDG…DFQHLAKVYD (180 aa). Residues arginine 142, lysine 166, histidine 233, arginine 236, and histidine 259 contribute to the active site. Tyrosine 268 acts as the O-(3'-phospho-DNA)-tyrosine intermediate in catalysis.

The protein belongs to the 'phage' integrase family. XerC subfamily. Forms a cyclic heterotetrameric complex composed of two molecules of XerC and two molecules of XerD.

It is found in the cytoplasm. Site-specific tyrosine recombinase, which acts by catalyzing the cutting and rejoining of the recombining DNA molecules. The XerC-XerD complex is essential to convert dimers of the bacterial chromosome into monomers to permit their segregation at cell division. It also contributes to the segregational stability of plasmids. The protein is Tyrosine recombinase XerC of Chromobacterium violaceum (strain ATCC 12472 / DSM 30191 / JCM 1249 / CCUG 213 / NBRC 12614 / NCIMB 9131 / NCTC 9757 / MK).